Reading from the N-terminus, the 397-residue chain is Protein EMSY-LIKE 3 (397 aa).

The disordered stretch occupies residues 1 to 40 (MDYRPSDSSGTDDDLPPSHQGRYQRNARPTGNGRPSVLNS). In terms of domain architecture, ENT spans 50-137 (METQIHLIEQ…PQLVHDAPSP (88 aa)). A coiled-coil region spans residues 81–107 (ESLITELRKELRVSDEEHRELLSRVNA). 2 disordered regions span residues 122-221 (SLQS…SYDP) and 284-330 (DPGI…TQNG). Over residues 164–174 (LHPSMQPSSSA) the composition is skewed to polar residues. A Nuclear localization signal motif is present at residues 175–182 (LRRGGPPP). Residues 363–389 (AEVEKAKRVLRDHELALMDAIAKLEEI) adopt a coiled-coil conformation. Serine 390 bears the Phosphoserine mark.

It is found in the nucleus. In terms of biological role, probably involved in the regulation of chromatin states. Contributes to basal immunity. This Arabidopsis thaliana (Mouse-ear cress) protein is Protein EMSY-LIKE 3.